We begin with the raw amino-acid sequence, 347 residues long: Integrin beta-1-binding protein 2 (347 aa).

4 residues coordinate Zn(2+): Cys5, Cys10, Cys24, and His27. The region spanning 5–64 is the CHORD 1 domain; sequence CRNKGCGQHFDPNTNLPDSCCHHPGVPIFHDALKGWSCCRKRTVDFSEFLNIKGCTMGPH. The short motif at 28-31 is the SH3-binding element; the sequence is PGVP. 4 residues coordinate Zn(2+): Cys42, Cys43, Cys59, and His64. The SH3-binding signature appears at 70–78; that stretch reads PEAPQPEGP. Zn(2+) contacts are provided by Cys149 and Cys154. The region spanning 149–208 is the CHORD 2 domain; sequence CQNPGCDAVYQGPESDATPCTYHPGAPRFHEGMKSWSCCGIQTLDFGAFLAQPGCRVGRH. The SH2-binding motif lies at 158 to 161; it reads YQGP. 2 residues coordinate Zn(2+): Cys168 and His171. The SH3-binding motif lies at 172 to 175; sequence PGAP. Zn(2+) contacts are provided by Cys186, Cys187, Cys203, and His208. The 90-residue stretch at 215–304 folds into the CS domain; sequence PASCRHDWHQ…ADPGSWAQLE (90 aa). The SH2-binding motif lies at 234 to 237; it reads YGQI. The disordered stretch occupies residues 319–347; it reads LEMDEEESDDSDDDLSWTEEEEEEEAMGE. The segment covering 320-347 has biased composition (acidic residues); sequence EMDEEESDDSDDDLSWTEEEEEEEAMGE.

Interacts with beta-1 integrin subunit. This interaction is regulated by divalent cations, and it occurs only in absence of calcium. In terms of tissue distribution, expressed in skeletal and cardiac muscles but not in other tissues.

May play a role during maturation and/or organization of muscles cells. In Homo sapiens (Human), this protein is Integrin beta-1-binding protein 2 (ITGB1BP2).